We begin with the raw amino-acid sequence, 409 residues long: Peptidase T (409 aa).

His78 serves as a coordination point for Zn(2+). The active site involves Asp80. Residue Asp140 participates in Zn(2+) binding. Catalysis depends on Glu174, which acts as the Proton acceptor. Glu175, Asp197, and His379 together coordinate Zn(2+).

This sequence belongs to the peptidase M20B family. Requires Zn(2+) as cofactor.

The protein localises to the cytoplasm. It carries out the reaction Release of the N-terminal residue from a tripeptide.. Cleaves the N-terminal amino acid of tripeptides. This is Peptidase T from Photobacterium profundum (strain SS9).